Here is a 341-residue protein sequence, read N- to C-terminus: D-aspartate oxidase (341 aa).

Residues aspartate 36, lysine 37, threonine 43, serine 44, methionine 50, glycine 307, and isoleucine 311 each coordinate FAD. A Microbody targeting signal motif is present at residues 339-341 (SKL).

The protein belongs to the DAMOX/DASOX family. In terms of assembly, homotetramer. Interacts with PEX5; the interaction is direct and required for localization of DDO to the peroxisome. FAD serves as cofactor. Expressed in epithelial cells of the renal proximal tubules (not detected in the glomeruli or renal distal tubules), liver, right atrium of heart, lung, chief cells of the gastric mucosa, choroid plexus, pia mater, brain stem, midbrain, pons, medulla oblongata, hypothalamus, hippocampus, cerebral cortex, cerebellum, ependyma, olfactory bulb and the pituitary, pineal, thyroid and adrenal glands (at protein level).

The protein localises to the peroxisome matrix. Its subcellular location is the cytoplasm. It is found in the cytosol. It catalyses the reaction D-aspartate + O2 + H2O = oxaloacetate + H2O2 + NH4(+). The enzyme catalyses D-glutamate + O2 + H2O = H2O2 + 2-oxoglutarate + NH4(+). In terms of biological role, selectively catalyzes the oxidative deamination of acidic amino acids. Suppresses the level of D-aspartate in the brain, an amino acid that can act as an agonist for glutamate receptors. Protects the organism from the toxicity of D-amino acids. May also function in the intestine. This is D-aspartate oxidase (DDO) from Sus scrofa (Pig).